A 530-amino-acid chain; its full sequence is AAA-ATPase At3g28510 (530 aa).

A helical transmembrane segment spans residues 5–25 (GAIWGITGTTVTSFMFFWAIY). Position 250–257 (250–257 (GPPGTGKS)) interacts with ATP. Disordered stretches follow at residues 312 to 339 (QRKK…KVDD) and 463 to 530 (KARK…KSDS). Composition is skewed to basic and acidic residues over residues 326-339 (EEKK…KVDD) and 463-511 (KARK…KEEN). The span at 512–523 (GNVSQQNGNSID) shows a compositional bias: polar residues.

Belongs to the AAA ATPase family. BCS1 subfamily. Requires Mg(2+) as cofactor.

It localises to the membrane. It carries out the reaction ATP + H2O = ADP + phosphate + H(+). In Arabidopsis thaliana (Mouse-ear cress), this protein is AAA-ATPase At3g28510.